Reading from the N-terminus, the 319-residue chain is HTH-type transcriptional regulator YidZ (319 aa).

Residues 8 to 65 (LDLNLLLCLQLLMQERSVTKAAKRMNVTPSAVSKSLAKLRAWFDDPLFVNSPLGLSPT) enclose the HTH lysR-type domain. A DNA-binding region (H-T-H motif) is located at residues 25–44 (VTKAAKRMNVTPSAVSKSLA).

It belongs to the LysR transcriptional regulatory family.

In terms of biological role, involved in anaerobic NO protection. This Escherichia coli O17:K52:H18 (strain UMN026 / ExPEC) protein is HTH-type transcriptional regulator YidZ.